Reading from the N-terminus, the 502-residue chain is MTAVTSDGTPQAAKVRVRFCPSPTGVPHVGMVRTALFNWAYARHTGGTFVLRIEDTDADRDSEESYLALLDALRWLGLNWDEGPEVGGPYGPYRQSQRTDIYREVVAKLLATGEAYYAFSTPEEVENRHLAAGRNPKLGYDNFDRDLTDAQFSAYLAEGRKPVVRLRMPDEDISWDDLVRGTTTFAVGTVPDYVLTRASGDPLYTLVNPCDDALMKITHVLRGEDLLSSTPRQVALYQALIRIGMAERIPEFGHFPSVLGEGTKKLSKREPQSNLFAHRDRGFIPEGLLNYLALLGWAIADDHDLFSLDEMVAAFDVVDVNSNPARFDQKKADAVNAEHIRMLDSEDFAGRLRDYFTTHGYHIALDPANYEAGFVAAAQLVQTRIVVLGDAWDLLKFLNDDEYSIDSKAAAKELDADAGPVLDVACAVLDSLVDWTTASIEDVLKVALIEGLGLKPRKVFGPIRVAATGALVSPPLFESLELLGRARSLQRLSAARARVTSA.

Residues 21 to 31 (PSPTGVPHVGM) carry the 'HIGH' region motif. Positions 265–269 (KLSKR) match the 'KMSKS' region motif. ATP is bound at residue lysine 268.

It belongs to the class-I aminoacyl-tRNA synthetase family. Glutamate--tRNA ligase type 1 subfamily. Monomer.

Its subcellular location is the cytoplasm. It catalyses the reaction tRNA(Glu) + L-glutamate + ATP = L-glutamyl-tRNA(Glu) + AMP + diphosphate. Its function is as follows. Catalyzes the attachment of glutamate to tRNA(Glu) in a two-step reaction: glutamate is first activated by ATP to form Glu-AMP and then transferred to the acceptor end of tRNA(Glu). This is Glutamate--tRNA ligase from Mycobacterium leprae (strain TN).